A 59-amino-acid polypeptide reads, in one-letter code: Small ribosomal subunit protein bS21 (59 aa).

Residues 32-42 show a composition bias toward basic and acidic residues; sequence VRKREHYDKPS. Positions 32–59 are disordered; that stretch reads VRKREHYDKPSVKRKKKAEAARRKNAKK. A compositionally biased stretch (basic residues) spans 43–59; sequence VKRKKKAEAARRKNAKK.

Belongs to the bacterial ribosomal protein bS21 family.

This Clostridioides difficile (strain 630) (Peptoclostridium difficile) protein is Small ribosomal subunit protein bS21.